The primary structure comprises 130 residues: D-ribose pyranase (130 aa).

His-20 serves as the catalytic Proton donor. Substrate-binding positions include Asp-28, His-97, and 119–121; that span reads YAN.

It belongs to the RbsD / FucU family. RbsD subfamily. In terms of assembly, homodecamer.

The protein resides in the cytoplasm. It catalyses the reaction beta-D-ribopyranose = beta-D-ribofuranose. It functions in the pathway carbohydrate metabolism; D-ribose degradation; D-ribose 5-phosphate from beta-D-ribopyranose: step 1/2. Catalyzes the interconversion of beta-pyran and beta-furan forms of D-ribose. This is D-ribose pyranase from Paracidovorax citrulli (strain AAC00-1) (Acidovorax citrulli).